Here is a 142-residue protein sequence, read N- to C-terminus: Hemoglobin subunit zeta (142 aa).

Ser-2 bears the N-acetylserine mark. In terms of domain architecture, Globin spans 2 to 142 (SLTKAERTMV…VSSVLTEKYR (141 aa)). Ser-53 carries the phosphoserine modification. His-59 provides a ligand contact to heme b. Position 73 is a phosphoserine (Ser-73). Residue His-88 participates in heme b binding.

Belongs to the globin family. Heterotetramer of two zeta chains and beta-type chains.

The zeta chain is an alpha-type chain of mammalian embryonic hemoglobin. This Equus caballus (Horse) protein is Hemoglobin subunit zeta (HBZ1).